A 92-amino-acid polypeptide reads, in one-letter code: Cell division topological specificity factor (92 aa).

Belongs to the MinE family.

Its function is as follows. Prevents the cell division inhibition by proteins MinC and MinD at internal division sites while permitting inhibition at polar sites. This ensures cell division at the proper site by restricting the formation of a division septum at the midpoint of the long axis of the cell. The polypeptide is Cell division topological specificity factor (Symbiobacterium thermophilum (strain DSM 24528 / JCM 14929 / IAM 14863 / T)).